A 124-amino-acid polypeptide reads, in one-letter code: Phycocyanin PC645 alpha-3 subunit (124 aa).

Arg71 is a binding site for (2R,3E)-phycocyanobilin. Residues Cys73, Tyr81, and Lys97 each contribute to the mesobiliverdin site.

It belongs to the phycoerythrin family. In terms of assembly, heterotetramer of 2 different alpha chains and 2 identical beta chains which form 2 alpha-beta heterodimers within the heterotetramer. Post-translationally, contains one phycocyanobilin chromophore and one mesobiliverdin chromophore with binding mediated by both the alpha and beta subunits.

It localises to the plastid. It is found in the chloroplast thylakoid membrane. In terms of biological role, light-harvesting photosynthetic tetrapyrrole chromophore-protein from the phycobiliprotein complex. This Chroomonas sp. (strain CCMP270) protein is Phycocyanin PC645 alpha-3 subunit.